The chain runs to 267 residues: Interleukin-1 beta (267 aa).

Positions 1 to 114 (MAIVPEPAKE…ETCNDDFVCD (114 aa)) are excised as a propeptide.

This sequence belongs to the IL-1 family. In terms of assembly, (Microbial infection) Interacts with African swine fever virus (ASFV) protein L83L. Monomer. In its precursor form, weakly interacts with full-length MEFV; the mature cytokine does not interact at all. Interacts with integrins ITGAV:ITGBV and ITGA5:ITGB1; integrin-binding is required for IL1B signaling. Interacts with cargo receptor TMED10; the interaction is direct and is required for the secretion of IL1B mature form. Interacts with HSP90AB1; the interaction facilitates cargo translocation into the ERGIC. Interacts with HSP90B1; the interaction facilitates cargo translocation into the ERGIC.

It is found in the cytoplasm. The protein resides in the cytosol. It localises to the secreted. The protein localises to the lysosome. Its subcellular location is the extracellular exosome. In terms of biological role, potent pro-inflammatory cytokine. Initially discovered as the major endogenous pyrogen, induces prostaglandin synthesis, neutrophil influx and activation, T-cell activation and cytokine production, B-cell activation and antibody production, and fibroblast proliferation and collagen production. Promotes Th17 differentiation of T-cells. Synergizes with IL12/interleukin-12 to induce IFNG synthesis from T-helper 1 (Th1) cells. Plays a role in angiogenesis by inducing VEGF production synergistically with TNF and IL6. Involved in transduction of inflammation downstream of pyroptosis: its mature form is specifically released in the extracellular milieu by passing through the gasdermin-D (GSDMD) pore. The chain is Interleukin-1 beta (IL1B) from Sus scrofa (Pig).